The sequence spans 108 residues: Thiosulfate sulfurtransferase GlpE (108 aa).

Residues 17-105 (HQGAAVLVDI…WHRHFPADVA (89 aa)) form the Rhodanese domain. Catalysis depends on Cys65, which acts as the Cysteine persulfide intermediate.

The protein belongs to the GlpE family.

The protein resides in the cytoplasm. The enzyme catalyses thiosulfate + hydrogen cyanide = thiocyanate + sulfite + 2 H(+). It catalyses the reaction thiosulfate + [thioredoxin]-dithiol = [thioredoxin]-disulfide + hydrogen sulfide + sulfite + 2 H(+). In terms of biological role, transferase that catalyzes the transfer of sulfur from thiosulfate to thiophilic acceptors such as cyanide or dithiols. May function in a CysM-independent thiosulfate assimilation pathway by catalyzing the conversion of thiosulfate to sulfite, which can then be used for L-cysteine biosynthesis. This Salmonella arizonae (strain ATCC BAA-731 / CDC346-86 / RSK2980) protein is Thiosulfate sulfurtransferase GlpE.